We begin with the raw amino-acid sequence, 168 residues long: Large ribosomal subunit protein uL10 (168 aa).

The protein belongs to the universal ribosomal protein uL10 family. In terms of assembly, part of the ribosomal stalk of the 50S ribosomal subunit. The N-terminus interacts with L11 and the large rRNA to form the base of the stalk. The C-terminus forms an elongated spine to which L12 dimers bind in a sequential fashion forming a multimeric L10(L12)X complex.

Functionally, forms part of the ribosomal stalk, playing a central role in the interaction of the ribosome with GTP-bound translation factors. This is Large ribosomal subunit protein uL10 from Acinetobacter baumannii (strain AB307-0294).